The following is a 99-amino-acid chain: Small ribosomal subunit protein eS24 (99 aa).

Belongs to the eukaryotic ribosomal protein eS24 family.

The protein is Small ribosomal subunit protein eS24 of Pyrococcus abyssi (strain GE5 / Orsay).